The sequence spans 940 residues: Gamma-aminobutyric acid type B receptor subunit 2 (940 aa).

A signal peptide spans 1–40 (MASPPSSGQPRPPPPPPPPARLLLPLLLSLLLWLAPGAWG). At 41–482 (WTRGAPRPPP…LRKISLPLYS (442 aa)) the chain is on the extracellular side. N-linked (GlcNAc...) asparagine glycosylation occurs at Asn-89. 3 cysteine pairs are disulfide-bonded: Cys-107-Cys-134, Cys-236-Cys-265, and Cys-264-Cys-301. N-linked (GlcNAc...) asparagine glycans are attached at residues Asn-297, Asn-388, Asn-403, and Asn-452. Residues 483-503 (ILSALTILGMIMASAFLFFNI) form a helical membrane-spanning segment. The Cytoplasmic portion of the chain corresponds to 504–521 (KNRNQKLIKMSSPYMNNL). The helical transmembrane segment at 522 to 542 (IILGGMLSYASIFLFGLDGSF) threads the bilayer. Topologically, residues 543–550 (VSEKTFET) are extracellular. A helical membrane pass occupies residues 551-571 (LCTVRTWILTVGYTTAFGAMF). Over 572 to 596 (AKTWRVHAIFKNVKMKKKIIKDQKL) the chain is Cytoplasmic. Residues 597 to 617 (LVIVGGMLLIDLCILICWQAV) traverse the membrane as a helical segment. The Extracellular portion of the chain corresponds to 618-653 (DPLRRTVERYSMEPDPAGRDISIRPLLEHCENTHMT). The chain crosses the membrane as a helical span at residues 654-674 (IWLGIVYAYKGLLMLFGCFLA). Residues 675–690 (WETRNVSIPALNDSKY) lie on the Cytoplasmic side of the membrane. Residues 691–711 (IGMSVYNVGIMCIIGAAVSFL) traverse the membrane as a helical segment. Residues 712-719 (TRDQPNVQ) are Extracellular-facing. The chain crosses the membrane as a helical span at residues 720-740 (FCIVALVIIFCSTITLCLVFV). Over 741-940 (PKLITLRTNP…PSFRVMVSGL (200 aa)) the chain is Cytoplasmic. The disordered stretch occupies residues 762–789 (TQNQKKEDSKTSTSVTSVNQASTSRLEG). Polar residues predominate over residues 772-786 (TSTSVTSVNQASTSR). 2 positions are modified to phosphoserine: Ser-775 and Ser-778. Residues 780-818 (NQASTSRLEGLQSENHRLRMKITELDKDLEEVTMQLQDT) are a coiled coil. At Thr-818 the chain carries Phosphothreonine. Ser-883, Ser-892, Ser-912, Ser-915, Ser-919, and Ser-923 each carry phosphoserine.

The protein belongs to the G-protein coupled receptor 3 family. GABA-B receptor subfamily. In terms of assembly, heterodimer of GABBR1 and GABBR2. Homodimers may form, but are inactive. Interacts (via C-terminus) with ATF4 (via leucine zipper domain). Interacts with KCTD8, KCTD12 and KCTD16; this interaction determines the pharmacology and kinetics of the receptor response, the KCTD proteins markedly accelerating the GABA-B response, although to different extents. As to expression, highly expressed in areas of the brain including thalamic nuclei, the hippocampus, cerebellar Purkinje cells and the medial habenula, and moderately expressed in the cerebral cortex, certain anterioventral thalamic nuclei, dorsal medial hypothalamic nucleus and suprachiasmatic nuclei. Also weakly expressed in the testis.

The protein resides in the cell membrane. Its subcellular location is the postsynaptic cell membrane. It is found in the perikaryon. The protein localises to the cell projection. It localises to the dendrite. In terms of biological role, component of a heterodimeric G-protein coupled receptor for GABA, formed by GABBR1 and GABBR2. Within the heterodimeric GABA receptor, only GABBR1 seems to bind agonists, while GABBR2 mediates coupling to G proteins. Ligand binding causes a conformation change that triggers signaling via guanine nucleotide-binding proteins (G proteins) and modulates the activity of down-stream effectors, such as adenylate cyclase. Signaling inhibits adenylate cyclase, stimulates phospholipase A2, activates potassium channels, inactivates voltage-dependent calcium-channels and modulates inositol phospholipid hydrolysis. Plays a critical role in the fine-tuning of inhibitory synaptic transmission. Pre-synaptic GABA receptor inhibits neurotransmitter release by down-regulating high-voltage activated calcium channels, whereas postsynaptic GABA receptor decreases neuronal excitability by activating a prominent inwardly rectifying potassium (Kir) conductance that underlies the late inhibitory postsynaptic potentials. Not only implicated in synaptic inhibition but also in hippocampal long-term potentiation, slow wave sleep, muscle relaxation and antinociception. This Rattus norvegicus (Rat) protein is Gamma-aminobutyric acid type B receptor subunit 2 (Gabbr2).